The chain runs to 308 residues: UDP-N-acetylenolpyruvoylglucosamine reductase (308 aa).

Residues Arg35–Met200 form the FAD-binding PCMH-type domain. Arg180 is an active-site residue. Basic and acidic residues predominate over residues Glu211–Thr226. A disordered region spans residues Glu211–Gly236. Ser229 acts as the Proton donor in catalysis. The active site involves Glu299.

This sequence belongs to the MurB family. The cofactor is FAD.

The protein localises to the cytoplasm. It catalyses the reaction UDP-N-acetyl-alpha-D-muramate + NADP(+) = UDP-N-acetyl-3-O-(1-carboxyvinyl)-alpha-D-glucosamine + NADPH + H(+). The protein operates within cell wall biogenesis; peptidoglycan biosynthesis. Its function is as follows. Cell wall formation. This chain is UDP-N-acetylenolpyruvoylglucosamine reductase, found in Rhodopseudomonas palustris (strain BisB18).